The chain runs to 500 residues: Aspartyl/glutamyl-tRNA(Asn/Gln) amidotransferase subunit B (500 aa).

The protein belongs to the GatB/GatE family. GatB subfamily. As to quaternary structure, heterotrimer of A, B and C subunits.

It catalyses the reaction L-glutamyl-tRNA(Gln) + L-glutamine + ATP + H2O = L-glutaminyl-tRNA(Gln) + L-glutamate + ADP + phosphate + H(+). It carries out the reaction L-aspartyl-tRNA(Asn) + L-glutamine + ATP + H2O = L-asparaginyl-tRNA(Asn) + L-glutamate + ADP + phosphate + 2 H(+). Functionally, allows the formation of correctly charged Asn-tRNA(Asn) or Gln-tRNA(Gln) through the transamidation of misacylated Asp-tRNA(Asn) or Glu-tRNA(Gln) in organisms which lack either or both of asparaginyl-tRNA or glutaminyl-tRNA synthetases. The reaction takes place in the presence of glutamine and ATP through an activated phospho-Asp-tRNA(Asn) or phospho-Glu-tRNA(Gln). This Rhizobium etli (strain CIAT 652) protein is Aspartyl/glutamyl-tRNA(Asn/Gln) amidotransferase subunit B.